A 477-amino-acid chain; its full sequence is Cytochrome c oxidase subunit 1 (477 aa).

The chain crosses the membrane as a helical span at residues 16-36 (VGTMYLMLGMWSGFGGLNLSW). Residues Glu41 and Gly46 each contribute to the Ca(2+) site. Fe(II)-heme a is bound at residue His62. 6 consecutive transmembrane segments (helical) span residues 64 to 84 (IMMI…NWLL), 101 to 121 (FSFW…FIDY), 149 to 171 (ILGL…VTFL), 185 to 205 (LFVW…PVLA), 236 to 256 (LFWF…FGLV), and 269 to 289 (VFGS…GFIV). His242 contacts Cu cation. The segment at residues 242-246 (HPEVY) is a cross-link (1'-histidyl-3'-tyrosine (His-Tyr)). Tyr246 contacts O2. Positions 292 and 293 each coordinate Cu cation. The next 2 helical transmembrane spans lie at 309–329 (AVTM…IATI) and 340–360 (TLWV…GVIL). The Mg(2+) site is built by His370 and Asp371. Position 378 (His378) interacts with heme a3. His380 contacts Fe(II)-heme a. The next 2 helical transmembrane spans lie at 382 to 402 (VLSM…FPFF) and 416 to 436 (FFLT…LGLG). Pro443 contacts Ca(2+). Residues 455–475 (WSTIGCAMVMVSVSLFIHMQW) form a helical membrane-spanning segment.

This sequence belongs to the heme-copper respiratory oxidase family. In terms of assembly, component of the cytochrome c oxidase (complex IV, CIV), a multisubunit enzyme composed of a catalytic core of 3 subunits and several supernumerary subunits. The complex exists as a monomer or a dimer and forms supercomplexes (SCs) in the inner mitochondrial membrane with ubiquinol-cytochrome c oxidoreductase (cytochrome b-c1 complex, complex III, CIII). It depends on heme as a cofactor. Cu cation serves as cofactor.

Its subcellular location is the mitochondrion inner membrane. The enzyme catalyses 4 Fe(II)-[cytochrome c] + O2 + 8 H(+)(in) = 4 Fe(III)-[cytochrome c] + 2 H2O + 4 H(+)(out). It functions in the pathway energy metabolism; oxidative phosphorylation. Component of the cytochrome c oxidase, the last enzyme in the mitochondrial electron transport chain which drives oxidative phosphorylation. The respiratory chain contains 3 multisubunit complexes succinate dehydrogenase (complex II, CII), ubiquinol-cytochrome c oxidoreductase (cytochrome b-c1 complex, complex III, CIII) and cytochrome c oxidase (complex IV, CIV), that cooperate to transfer electrons derived from NADH and succinate to molecular oxygen, creating an electrochemical gradient over the inner membrane that drives transmembrane transport and the ATP synthase. Cytochrome c oxidase is the component of the respiratory chain that catalyzes the reduction of oxygen to water. Electrons originating from reduced cytochrome c in the intermembrane space (IMS) are transferred via the dinuclear copper A center (CU(A)) of subunit 2 and heme A of subunit 1 to the active site in subunit 1, a binuclear center (BNC) formed by heme A3 and copper B (CU(B)). The BNC reduces molecular oxygen to 2 water molecules using 4 electrons from cytochrome c in the IMS and 4 protons from the mitochondrial matrix. This Pecten maximus (King scallop) protein is Cytochrome c oxidase subunit 1 (COI).